A 441-amino-acid polypeptide reads, in one-letter code: Queuine tRNA-ribosyltransferase accessory subunit 2 (441 aa).

Cysteine 307, cysteine 309, cysteine 312, and histidine 338 together coordinate Zn(2+).

This sequence belongs to the queuine tRNA-ribosyltransferase family. QTRT2 subfamily. As to quaternary structure, heterodimer of a catalytic subunit and an accessory subunit. Zn(2+) serves as cofactor.

It is found in the cytoplasm. Functionally, non-catalytic subunit of the queuine tRNA-ribosyltransferase (TGT) that catalyzes the base-exchange of a guanine (G) residue with queuine (Q) at position 34 (anticodon wobble position) in tRNAs with GU(N) anticodons (tRNA-Asp, -Asn, -His and -Tyr), resulting in the hypermodified nucleoside queuosine (7-(((4,5-cis-dihydroxy-2-cyclopenten-1-yl)amino)methyl)-7-deazaguanosine). The sequence is that of Queuine tRNA-ribosyltransferase accessory subunit 2 (qtr2) from Schizosaccharomyces pombe (strain 972 / ATCC 24843) (Fission yeast).